A 181-amino-acid chain; its full sequence is GTP cyclohydrolase 1 2 (181 aa).

This sequence belongs to the GTP cyclohydrolase I family. Homomer.

It carries out the reaction GTP + H2O = 7,8-dihydroneopterin 3'-triphosphate + formate + H(+). It functions in the pathway cofactor biosynthesis; 7,8-dihydroneopterin triphosphate biosynthesis; 7,8-dihydroneopterin triphosphate from GTP: step 1/1. The polypeptide is GTP cyclohydrolase 1 2 (Pseudomonas syringae pv. tomato (strain ATCC BAA-871 / DC3000)).